The sequence spans 442 residues: Citrate transporter CitP (442 aa).

Helical transmembrane passes span 27-47 (ISGIGLIAYAFMAVLLIIAIS), 59-79 (IFALVLMGHVFYYLGAHLPIF), 83-103 (LGGGSVFTILLTAILVATNVI), 114-134 (FINGMDFLGLYIVSLIASSLF), 151-171 (VAFISMALTAVVIGIVGVIIG), 177-197 (AILYIAMPIMAGGVGAGIVPL), 209-229 (SAGILSKLFPTVILGNLLAII), 267-287 (YVQLGVGLIIAVMFFMIGTML), 293-313 (GINAYAFIILSIVLTKAFGLL), 321-341 (VIMFGQVIVKNMTHALLAGVG), 349-369 (VLLAALSWQFVVLCLVSIVAI), 387-409 (AAITAGLANNSMGGTGNVAVLAA), and 421-441 (MGNRIGGALILVVAGILVTFM).

The protein belongs to the 2-hydroxycarboxylate transporter (2-HCT) (TC 2.A.24) family.

Its subcellular location is the cell membrane. The catalysed reaction is (R)-lactate(in) + citrate(out) = (R)-lactate(out) + citrate(in). It carries out the reaction (S)-lactate(in) + citrate(out) = (S)-lactate(out) + citrate(in). It catalyses the reaction citrate(in) + H(+)(in) = citrate(out) + H(+)(out). Its activity is regulated as follows. The transport of citrate is unaffected by the presence of citrate in the growth media. Secondary transporter involved in citrate metabolism. During cometabolism of citrate and glucose, catalyzes the uptake of divalent citrate into the cell coupled to the exit of monovalent lactate, the end product of glycolysis in L.lactis. The citrate/lactate exchange is electrogenic and results in the generation of a membrane potential. Plays an important role in resistance against lactate toxicity at low pH. In the absence of glucose, i.e. when no lactate is produced, CitP catalyzes the uptake of citrate in exchange with the citrate metabolism intermediates pyruvate and alpha-acetolactate, and the end product acetate. In the absence of glucose, CitP can also catalyze the proton-dependent transport of citrate. In vitro, shows a broad substrate specificity. Can transport a wide variety of mono- and dicarboxylates of the form X-CR(2)-COO(-), where X represents OH (2-hydroxy acid), O (2-keto acid), or H (acid) and R groups differ in size, hydrophobicity and composition. Many of the substrates are intermediates or products of amino acid metabolism, suggesting that CitP may have a broader physiological function than its role in citrate metabolism. In Lactococcus lactis subsp. lactis (Streptococcus lactis), this protein is Citrate transporter CitP.